The chain runs to 46 residues: uncharacterized protein (46 aa).

The disordered stretch occupies residues Met-1–Pro-46. Polar residues predominate over residues Phe-25 to Gly-40.

This is an uncharacterized protein from Dictyostelium discoideum (Social amoeba).